The primary structure comprises 89 residues: Small ribosomal subunit protein bS20 (89 aa).

It belongs to the bacterial ribosomal protein bS20 family.

In terms of biological role, binds directly to 16S ribosomal RNA. The sequence is that of Small ribosomal subunit protein bS20 from Helicobacter acinonychis (strain Sheeba).